The chain runs to 393 residues: PxcA-like protein (393 aa).

4 consecutive transmembrane segments (helical) span residues 173-193, 271-291, 306-326, and 354-374; these read FLIVLIFIPLTVQILTKNLVF, IVNLLADIAGLVAFVVLIIVF, FLALNDITKVFIFILLTDMFV, and VYIFIATVPVFLDSLFKLLIF.

The protein belongs to the CemA family. PxcL subfamily.

Its subcellular location is the cell inner membrane. Together with PxcA, contributes to transient H(+) uptake following dark to light transition. Required for H(+) influx to activate the Calvin-Benson-Bassham cycle. May also be involved in CO(2) transport. This is PxcA-like protein from Synechocystis sp. (strain ATCC 27184 / PCC 6803 / Kazusa).